The sequence spans 510 residues: MAASPADASRRRREKRRQLDARRSKCRIRLGGHMEQWCLLKEQLGFSLHSQLAKFLLDRYTSSGCVLCAGPEPVAPKGLQYLVLLSHAHSRECSLVPGLRGPGGQDGGLVWECSAGHTFSWGPSSGPKSPEEPNLTPLPSTDERSWCPEAKSGQEPAGLESNCDERAQEARMPRGAGPPPETFPSLGEDGEEEEEDEEEMLSDASPWTYSSSPDDEPDVPKPPPSPVTHALKDGEIAPAPAAVPAPLASPSSSASSLGSGAPGPVEVRIQPELRGTPQADQQTEPLASPGSQAQSALASAWDEDTAQIGPKRIRKAAKRELLPCDFPGCGRIFSNRQYLNHHKKYQHIHQKSFSCPEPACGKSFNFKKHLKEHVKLHSDTRDYICEFCARSFRTSSNLVIHRRIHTGEKPLQCEICGFTCRQKASLNWHRRKHAETVAALRFPCEFCGKRFEKPDSVAAHRSKSHPALLLAPQELSGPVESCSSILASASLGASEGSRSTLAPQAPILLP.

Disordered regions lie at residues 1–20 (MAAS…RQLD) and 121–306 (WGPS…EDTA). S161 is subject to Phosphoserine. The span at 163–172 (CDERAQEARM) shows a compositional bias: basic and acidic residues. Positions 188 to 201 (EDGEEEEEDEEEML) are enriched in acidic residues. The residue at position 225 (S225) is a Phosphoserine. Positions 237 to 265 (APAPAAVPAPLASPSSSASSLGSGAPGPV) are enriched in low complexity. Over residues 278 to 297 (QADQQTEPLASPGSQAQSAL) the composition is skewed to polar residues. 5 C2H2-type zinc fingers span residues 322–347 (LPCD…KYQH), 353–377 (FSCP…VKLH), 383–405 (YICE…RRIH), 411–433 (LQCE…RRKH), and 442–465 (FPCE…SKSH). A Phosphoserine modification is found at S464.

Belongs to the krueppel C2H2-type zinc-finger protein family. Phosphorylation at Ser-464 results in loss of DNA-binding activity.

It localises to the nucleus. Functionally, may act as an transcriptional repressor for PCK1 gene expression, in turn may participate in the hepatic gluconeogenesis regulation through the activated AMPK signaling pathway. This chain is Zinc finger protein 692, found in Bos taurus (Bovine).